Consider the following 190-residue polypeptide: Potassium-transporting ATPase KdpC subunit (190 aa).

Residues 10-30 form a helical membrane-spanning segment; that stretch reads TFIFLLLITGGVYPLLTTVLG.

It belongs to the KdpC family. The system is composed of three essential subunits: KdpA, KdpB and KdpC.

The protein resides in the cell inner membrane. In terms of biological role, part of the high-affinity ATP-driven potassium transport (or Kdp) system, which catalyzes the hydrolysis of ATP coupled with the electrogenic transport of potassium into the cytoplasm. This subunit acts as a catalytic chaperone that increases the ATP-binding affinity of the ATP-hydrolyzing subunit KdpB by the formation of a transient KdpB/KdpC/ATP ternary complex. In Escherichia coli (strain SE11), this protein is Potassium-transporting ATPase KdpC subunit.